The chain runs to 1043 residues: Calcium-transporting ATPase 1, plasma membrane-type (1043 aa).

The Cytoplasmic segment spans residues Met1–Thr178. A run of 2 helical transmembrane segments spans residues Leu179–Trp199 and Gly202–Ala222. At Ser223–Asp258 the chain is on the cytoplasmic side. The next 2 helical transmembrane spans lie at Ile259–Phe279 and Val356–Met376. The Cytoplasmic segment spans residues Ala377–Met395. The chain crosses the membrane as a helical span at residues Val396–Val416. The active-site 4-aspartylphosphate intermediate is Asp460. Residues Asp761 and Asp765 each contribute to the Mg(2+) site. The helical transmembrane segment at Leu824–Ala844 threads the bilayer. Pro845 is a topological domain (cytoplasmic). 2 helical membrane passes run Leu846–Leu866 and Val891–Leu911. The Cytoplasmic segment spans residues Leu912–Asn955. Transmembrane regions (helical) follow at residues Val956–Phe976 and Trp998–Ile1018. Over Pro1019 to Val1043 the chain is Cytoplasmic. Positions Gly1023–Val1043 are disordered.

Belongs to the cation transport ATPase (P-type) (TC 3.A.3) family. Type IIB subfamily.

The protein localises to the membrane. The catalysed reaction is Ca(2+)(in) + ATP + H2O = Ca(2+)(out) + ADP + phosphate + H(+). Its activity is regulated as follows. Activated by calmodulin. This magnesium-dependent enzyme catalyzes the hydrolysis of ATP coupled with the translocation of calcium from the cytosol out of the cell, into the endoplasmic reticulum, or into organelles. The polypeptide is Calcium-transporting ATPase 1, plasma membrane-type (Oryza sativa subsp. japonica (Rice)).